The sequence spans 401 residues: Argininosuccinate synthase (401 aa).

Residues 9–17 (AYSGGLDTS) and alanine 35 contribute to the ATP site. Tyrosine 86 contributes to the L-citrulline binding site. Position 116 (glycine 116) interacts with ATP. Residues threonine 118, asparagine 122, and aspartate 123 each contribute to the L-aspartate site. Residue asparagine 122 coordinates L-citrulline. Residues arginine 126, serine 175, serine 184, glutamate 261, and tyrosine 273 each contribute to the L-citrulline site.

The protein belongs to the argininosuccinate synthase family. Type 1 subfamily. Homotetramer.

It is found in the cytoplasm. The enzyme catalyses L-citrulline + L-aspartate + ATP = 2-(N(omega)-L-arginino)succinate + AMP + diphosphate + H(+). The protein operates within amino-acid biosynthesis; L-arginine biosynthesis; L-arginine from L-ornithine and carbamoyl phosphate: step 2/3. The protein is Argininosuccinate synthase of Aquifex aeolicus (strain VF5).